Here is a 289-residue protein sequence, read N- to C-terminus: Acetyl-coenzyme A carboxylase carboxyl transferase subunit beta (289 aa).

The region spanning V28–S289 is the CoA carboxyltransferase N-terminal domain. Residues C32, C35, C51, and C54 each coordinate Zn(2+). A C4-type zinc finger spans residues C32–C54.

Belongs to the AccD/PCCB family. As to quaternary structure, acetyl-CoA carboxylase is a heterohexamer composed of biotin carboxyl carrier protein (AccB), biotin carboxylase (AccC) and two subunits each of ACCase subunit alpha (AccA) and ACCase subunit beta (AccD). Zn(2+) is required as a cofactor.

It is found in the cytoplasm. It carries out the reaction N(6)-carboxybiotinyl-L-lysyl-[protein] + acetyl-CoA = N(6)-biotinyl-L-lysyl-[protein] + malonyl-CoA. The protein operates within lipid metabolism; malonyl-CoA biosynthesis; malonyl-CoA from acetyl-CoA: step 1/1. Its function is as follows. Component of the acetyl coenzyme A carboxylase (ACC) complex. Biotin carboxylase (BC) catalyzes the carboxylation of biotin on its carrier protein (BCCP) and then the CO(2) group is transferred by the transcarboxylase to acetyl-CoA to form malonyl-CoA. The sequence is that of Acetyl-coenzyme A carboxylase carboxyl transferase subunit beta from Bacillus cereus (strain G9842).